Here is a 333-residue protein sequence, read N- to C-terminus: NADH dehydrogenase (ubiquinone) complex I, assembly factor 6 (333 aa).

A mitochondrion-targeting transit peptide spans 1–44; sequence MAASTLGSAWGPLRLGVPGLCRRRPPRGLWARARRLSEPVASGR.

Belongs to the NDUFAF6 family.

It is found in the mitochondrion inner membrane. Involved in the assembly of mitochondrial NADH:ubiquinone oxidoreductase complex (complex I) at early stages. May play a role in the biogenesis of complex I subunit MT-ND1. The sequence is that of NADH dehydrogenase (ubiquinone) complex I, assembly factor 6 (NDUFAF6) from Bos taurus (Bovine).